The chain runs to 191 residues: UPF0669 protein C6orf120 (191 aa).

A signal peptide spans 1–30 (MAAPRGRAAPWTTALLLLLASQVLSPGSCA). Asn53 is a glycosylation site (N-linked (GlcNAc...) asparagine).

It belongs to the UPF0669 family. Mainly expressed in hepatocytes and some weak expression in germinal center cells of lymph nodes.

Its subcellular location is the secreted. In terms of biological role, may be involved in induction of apoptosis in CD4(+) T-cells, but not CD8(+) T-cells or hepatocytes. The protein is UPF0669 protein C6orf120 (C6orf120) of Homo sapiens (Human).